Here is a 423-residue protein sequence, read N- to C-terminus: T-box transcription factor T-A (423 aa).

The segment at residues 44–212 is a DNA-binding region (T-box); sequence LWTKFKELTN…HNPFAKAFLD (169 aa). Over residues 215–227 the composition is skewed to basic and acidic residues; that stretch reads ERSDHKEVPDHST. 2 disordered regions span residues 215 to 234 and 280 to 304; these read ERSD…QSGY and AAPY…SSGS. Over residues 290-304 the composition is skewed to polar residues; it reads RSTTTNNYMDNSSGS.

As to quaternary structure, monomer. Binds DNA as a monomer. As to expression, first expressed at the dorsal side of the blastula embryo. Expressed in the germ ring, shield and chordamesoderm during gastrulation and is restricted to the notochord and tailbud during somitogenesis (at protein level).

The protein localises to the nucleus. Functionally, involved in the transcriptional regulation of genes required for mesoderm differentiation, including itself. Indispensable for the formation of the notochord and the tail structure. Functions together with tbx16/spadetail in development of trunk and tail mesoderm. Functions by itself early in development to repress medial floor plate and promote notochord fate but at later times, functions together with tbx16/spadetail to promote medial floor plate formation. Acts in a parallel pathway to, but cooperates with, non-canonical wnt-signaling during tail formation. Required for the morphogenesis of Kupffer's vesicle and regulates left-right asymmetry. In Danio rerio (Zebrafish), this protein is T-box transcription factor T-A (tbxta).